Reading from the N-terminus, the 556-residue chain is Testis-specific protein 10-interacting protein (556 aa).

Over residues 1–16 (MGQDTDMLNTYQQLVR) the composition is skewed to polar residues. Disordered stretches follow at residues 1 to 31 (MGQD…LQAP), 50 to 102 (GCLG…LLPR), 123 to 155 (LQPS…ANLP), and 179 to 309 (GGVS…QWRK). The segment covering 208 to 219 (GSASDKQVQLQS) has biased composition (polar residues). Residues 244-258 (SEEEQFSEATEEAEE) are compositionally biased toward acidic residues. A compositionally biased stretch (polar residues) spans 289–301 (QGQSQGSSPSFNN). The stretch at 379-464 (RQEATRSLLQ…LQGIQHRVQA (86 aa)) forms a coiled coil. A disordered region spans residues 503–556 (AGKVDREGTPRKPRSHRSMGVRMEHSPQRPPRTEPTGSQPDRHYNPSLDPECSP).

The polypeptide is Testis-specific protein 10-interacting protein (TSGA10IP) (Homo sapiens (Human)).